The sequence spans 767 residues: V-set and immunoglobulin domain-containing protein 10-like 2 (767 aa).

The first 28 residues, 1-28 (MVGQRAQHSPVSLLLLIHLCLLHLRASG), serve as a signal peptide directing secretion. Ig-like domains are found at residues 34 to 140 (PEAP…SHLT), 150 to 234 (PQVR…AFLD), and 242 to 324 (PVIT…TTVQ). Cystine bridges form between Cys-56/Cys-122, Cys-169/Cys-217, and Cys-268/Cys-308. A glycan (N-linked (GlcNAc...) asparagine) is linked at Asn-376. 2 consecutive Ig-like domains span residues 399 to 499 (PALA…LQLE) and 501 to 593 (PQLD…VLLE). 2 cysteine pairs are disulfide-bonded: Cys-435–Cys-481 and Cys-522–Cys-577. The Fibronectin type-III domain occupies 599–699 (APPNVTISRL…EVKIPADPPF (101 aa)). N-linked (GlcNAc...) asparagine glycosylation is found at Asn-602 and Asn-628. The helical transmembrane segment at 704–724 (AVLGAAGTGMVVATVASLLVF) threads the bilayer. Residues 735–754 (PRLETPTTTPGLDPAQETTD) form a disordered region. Residues 739 to 754 (TPTTTPGLDPAQETTD) are compositionally biased toward polar residues.

It is found in the membrane. In Homo sapiens (Human), this protein is V-set and immunoglobulin domain-containing protein 10-like 2.